A 237-amino-acid polypeptide reads, in one-letter code: Bax inhibitor 1 (237 aa).

The Cytoplasmic segment spans residues 1-29 (MNIFDRKINFDALLKFSHITPSTQQHLKK). Lys7 is covalently cross-linked (Glycyl lysine isopeptide (Lys-Gly) (interchain with G-Cter in ubiquitin)). A helical membrane pass occupies residues 30-50 (VYASFALCMFVAAAGAYVHVV). Residues 51–52 (TH) lie on the Lumenal side of the membrane. The helical transmembrane segment at 53-73 (FIQAGLLSALGSLALMIWLMA) threads the bilayer. The Cytoplasmic portion of the chain corresponds to 74–86 (TPHSHETEQKRLG). A helical membrane pass occupies residues 87 to 107 (LLAGFAFLTGVGLGPALELCI). The Lumenal portion of the chain corresponds to 108-112 (AVNPS). Residues 113–133 (ILPTAFMGTAMIFTCFSLSAL) traverse the membrane as a helical segment. Over 134–139 (YARRRS) the chain is Cytoplasmic. A helical transmembrane segment spans residues 140 to 160 (YLFLGGILMSAMSLMLLSSLG). Residues 161–166 (NLFFGS) lie on the Lumenal side of the membrane. A helical transmembrane segment spans residues 167 to 187 (IWLFQANLYLGLLVMCGFVLF). The Cytoplasmic portion of the chain corresponds to 188 to 206 (DTQLIIEKAEHGDKDYIWH). The segment at residues 207 to 227 (CVDLFLDFVTLFRKLMLILAF) is an intramembrane region (helical). Residues 228–237 (NEKDKKKEKK) are Cytoplasmic-facing.

The protein belongs to the BI1 family. As to quaternary structure, interacts with BCL2. Interacts with BCL2L1. Interacts with ERN1. Ubiquitinated by BFAR, leading to proteasomal degradation. In terms of tissue distribution, highly abundant in adult testis.

The protein resides in the endoplasmic reticulum membrane. Endoplasmic reticulum (ER)-resident protein that confers cellular protection as an anti-apoptotic protein by limiting multiple stress-inducing pathways surrounding the endoplasmic reticulum and mitochondria. Inhibits the activities of the key sensor for the endoplasmic reticulum unfolded protein response IRE1alpha/ERN1 both directly and by blocking BAX/BAK binding. Modulates ER calcium homeostasis by acting as a calcium-leak channel. Negatively regulates autophagy and autophagosome formation, especially during periods of nutrient deprivation, and reduces cell survival during starvation. This chain is Bax inhibitor 1 (Tmbim6), found in Mus musculus (Mouse).